Reading from the N-terminus, the 1050-residue chain is Self-sufficient cytochrome P450 monooxygenase CYP505E3 (1050 aa).

Cys-406 contacts heme. The segment covering 459–481 (RGQSATGLSQGSMSASGATSSVA) has biased composition (polar residues). A disordered region spans residues 459–495 (RGQSATGLSQGSMSASGATSSVASPGPPAATGAQSNP). In terms of domain architecture, Flavodoxin-like spans 501-641 (ISFFYGSNSG…DLELWEETNL (141 aa)). Residues 507–511 (SNSGT) and 585–617 (VFGC…TRLT) contribute to the FMN site. Residues 679 to 907 (RGLVEAKVTA…RPAKDAFHLP (229 aa)) form the FAD-binding FR-type domain.

In the N-terminal section; belongs to the cytochrome P450 family. FAD serves as cofactor. The cofactor is FMN. Heme is required as a cofactor.

It carries out the reaction 2 oxidized [cytochrome P450] + NADPH = 2 reduced [cytochrome P450] + NADP(+) + H(+). The enzyme catalyses an organic molecule + reduced [NADPH--hemoprotein reductase] + O2 = an alcohol + oxidized [NADPH--hemoprotein reductase] + H2O + H(+). It catalyses the reaction decane + reduced [NADPH--hemoprotein reductase] + O2 = 3-decanol + oxidized [NADPH--hemoprotein reductase] + H2O + H(+). The catalysed reaction is dodecane + reduced [NADPH--hemoprotein reductase] + O2 = 5-dodecanol + oxidized [NADPH--hemoprotein reductase] + H2O + H(+). It carries out the reaction tetradecane + reduced [NADPH--hemoprotein reductase] + O2 = 7-tetradecanol + oxidized [NADPH--hemoprotein reductase] + H2O + H(+). The enzyme catalyses hexadecane + reduced [NADPH--hemoprotein reductase] + O2 = 9-hexadecanol + oxidized [NADPH--hemoprotein reductase] + H2O + H(+). It catalyses the reaction dodecanoate + reduced [NADPH--hemoprotein reductase] + O2 = 5-hydroxydodecanoate + oxidized [NADPH--hemoprotein reductase] + H2O + H(+). The catalysed reaction is tetradecanoate + reduced [NADPH--hemoprotein reductase] + O2 = 7-hydroxytetradecanoate + oxidized [NADPH--hemoprotein reductase] + H2O + H(+). It carries out the reaction hexadecanoate + reduced [NADPH--hemoprotein reductase] + O2 = 9-hydroxyhexadecanoate + oxidized [NADPH--hemoprotein reductase] + H2O + H(+). The enzyme catalyses decan-1-ol + reduced [NADPH--hemoprotein reductase] + O2 = 1,3-decanediol + oxidized [NADPH--hemoprotein reductase] + H2O + H(+). It catalyses the reaction decan-1-ol + reduced [NADPH--hemoprotein reductase] + O2 = 1,7-decanediol + oxidized [NADPH--hemoprotein reductase] + H2O + H(+). The catalysed reaction is dodecan-1-ol + reduced [NADPH--hemoprotein reductase] + O2 = 1,5-dodecanediol + oxidized [NADPH--hemoprotein reductase] + H2O + H(+). It carries out the reaction dodecan-1-ol + reduced [NADPH--hemoprotein reductase] + O2 = 1,4-dodecanediol + oxidized [NADPH--hemoprotein reductase] + H2O + H(+). The enzyme catalyses dodecan-1-ol + reduced [NADPH--hemoprotein reductase] + O2 = 1,6-dodecanediol + oxidized [NADPH--hemoprotein reductase] + H2O + H(+). Functionally, self-sufficient cytochrome P450 monooxygenase that catalyzes the regioselective in-chain hydroxylation of alkanes, fatty alcohols, and fatty acids at the omega-7 position. Performs hydroxylation of C10-C16 n-alkanes and C12 and C14 fatty alcohols; and thereby enables the one step biocatalytic synthesis of rare alcohols such as 5-dodecanol and 7-tetradecanol. Converts 1-dodecanol into 1,5-dodecanediol as major product with very little sub-terminally hydroxylated products with the 1,4-dodecanediol and 1,6-dodecanediol more abundant. Does not use hexadecanediol nor decanoic acid as substrates. Converts dodecanoic acid to 5-hydroxydodecanoic acid which can be further converted into delta-dodecalactone by lactonization of the 5-hydroxy acid at low pH. Also gives sub-terminal hydroxylation of dodecanoic acid with 9-hydroxydodecanoic acid being the second most abundant product. The C14 and C16 fatty acids are double hydroxylated to yield dihydroxy acids hydroxylated at both the omega-7 position and a sub-terminal position (omega-1, omega-2, or omega-3). The polypeptide is Self-sufficient cytochrome P450 monooxygenase CYP505E3 (Aspergillus terreus (strain NIH 2624 / FGSC A1156)).